Here is an 826-residue protein sequence, read N- to C-terminus: Sister chromatid cohesion protein PDS5 homolog D (826 aa).

5 HEAT repeats span residues 18 to 54, 55 to 94, 151 to 188, 189 to 226, and 230 to 267; these read GTNLLSPPSSTDDLLTLLDETESLLKNVEQDQPLSMQ, SALIPSRNALVSVDLLSHPDSDVRVSVVSCLTEIVRITAP, DLILQMFRNFFKFIRSDHPQLVFSSMELIMIAIIDETE, QVSTDLLDSLLATVKKENQNVSPMSWSLAEKVLSRCAR, and PYIIEALKSRGTSLDMYSPVVSSICQSVFNTPKVHSPV. 2 disordered regions span residues 261–551 and 640–826; these read PKVH…EVES and KKSK…KRKS. Basic and acidic residues-rich tracts occupy residues 269–286 and 296–309; these read TKEHEEKLDLGHSRKENL and RHETRGINEKEKVR. Residues 281 to 288 carry the Nuclear localization signal 1 motif; it reads SRKENLSK. The segment covering 311–323 has biased composition (polar residues); it reads GNKSSLLKQSLKQ. Residues 357–364 carry the Nuclear localization signal 2 motif; that stretch reads GKRDPLKT. Residues 396–408 show a composition bias toward polar residues; it reads SPATSSRSLTGSL. An HEAT 6 repeat occupies 424 to 461; sequence SLSSPRLKKLASCFRDEEPNQEDDRKIGNSSKQTRSKN. Residues 437–450 are compositionally biased toward basic and acidic residues; the sequence is FRDEEPNQEDDRKI. Positions 451-460 are enriched in polar residues; sequence GNSSKQTRSK. A compositionally biased stretch (low complexity) spans 644–663; that stretch reads NVAVSVEPTSSSGVRSSSRT. Positions 665–701 are enriched in basic and acidic residues; the sequence is MKKDCGKRLNKQVEKTREGKNLRSLKELNAETDRTAE. Residues 702–724 are compositionally biased toward acidic residues; it reads EQEVSLEAESDDRSEEQEYEDDC. Residues 725 to 746 show a composition bias toward basic and acidic residues; it reads SDKKEQSQDKGVEAETKEEEKQ. Composition is skewed to acidic residues over residues 752–763, 771–800, and 811–826; these read GESEGEDSESEE, DDMEDDEEEEEEEIDHMEDEAEEEKEEVDD, and EKEEEEEEEDEEKRKS. Residues 770 to 825 adopt a coiled-coil conformation; it reads TDDMEDDEEEEEEEIDHMEDEAEEEKEEVDDKEASANMSEIEKEEEEEEEDEEKRK.

The protein belongs to the PDS5 family. As to quaternary structure, interacts with the cohesin complex.

The protein resides in the nucleus. Its function is as follows. Cohesin cofactor dispensable during the meiotic division but playing an important role in DNA repair by homologous recombination (HR) probably by helping SMC5/SMC6 complex. Regulator of sister chromatid cohesion in mitosis which may stabilize cohesin complex association with chromatin. May couple sister chromatid cohesion during mitosis to DNA replication. Cohesion ensures that chromosome partitioning is accurate in both meiotic and mitotic cells and plays an important role in DNA repair. This is Sister chromatid cohesion protein PDS5 homolog D from Arabidopsis thaliana (Mouse-ear cress).